A 315-amino-acid polypeptide reads, in one-letter code: Acetaldehyde dehydrogenase 2 (315 aa).

11–14 (SGNI) is an NAD(+) binding site. Catalysis depends on cysteine 129, which acts as the Acyl-thioester intermediate. Residues 160-168 (SAGPGTRSN) and asparagine 290 each bind NAD(+).

It belongs to the acetaldehyde dehydrogenase family.

The enzyme catalyses acetaldehyde + NAD(+) + CoA = acetyl-CoA + NADH + H(+). In Mycobacterium sp. (strain KMS), this protein is Acetaldehyde dehydrogenase 2.